A 25-amino-acid polypeptide reads, in one-letter code: Ribosome-inactivating protein velutin (25 aa).

Positions 1 to 25 (XHPDLFXXRPDNTASPKFEDPRLNP) are disordered.

It belongs to the ribosome-inactivating protein family.

It catalyses the reaction Endohydrolysis of the N-glycosidic bond at one specific adenosine on the 28S rRNA.. In terms of biological role, inhibits protein synthesis but does not possess ribonuclease activity. Also inhibits HIV-1 reverse transcriptase, beta-glucosidase and beta-glucuronidase. The polypeptide is Ribosome-inactivating protein velutin (Flammulina velutipes (Agaricus velutipes)).